Reading from the N-terminus, the 142-residue chain is Large ribosomal subunit protein uL11 (142 aa).

It belongs to the universal ribosomal protein uL11 family. As to quaternary structure, part of the ribosomal stalk of the 50S ribosomal subunit. Interacts with L10 and the large rRNA to form the base of the stalk. L10 forms an elongated spine to which L12 dimers bind in a sequential fashion forming a multimeric L10(L12)X complex. One or more lysine residues are methylated.

Forms part of the ribosomal stalk which helps the ribosome interact with GTP-bound translation factors. In Nocardioides sp. (strain ATCC BAA-499 / JS614), this protein is Large ribosomal subunit protein uL11.